The following is a 557-amino-acid chain: Cytochrome P450 monooxygenase FSL4 (557 aa).

A run of 2 helical transmembrane segments spans residues leucine 6–leucine 26 and isoleucine 32–valine 52. Residues asparagine 127 and asparagine 393 are each glycosylated (N-linked (GlcNAc...) asparagine). Residue cysteine 494 participates in heme binding.

It belongs to the cytochrome P450 family. Heme serves as cofactor.

Its subcellular location is the membrane. The protein operates within secondary metabolite biosynthesis. In terms of biological role, cytochrome P450 monooxygenase; part of the gene cluster that mediates the biosynthesis of fusarielins F, G and H, decaketide compounds with 5 methylations and a decaline core that act as mycoestrogens as they stimulate growth of MCF-7 breast cancer cells. The initial compound in the pathway is produced by the reducing polyketide synthase FSL1. FSL1 lacks an active enoyl reductase (ER) domain and biosynthesis of fusarielins relies on the trans-acting enoyl reductase FSL5, before it is released through hydrolysis catalyzed by the thioesterase FSL2. Fusarielins F, G, and H have a C11=C12 cis double bond and is fully reduced between C10 and C11 and between C12 and C13. FSL3 can be involved in the formation of the C11=C12 cis double bond by moving a hypothetical C10=C11 or C12=C13 trans double bond to form prefusarielin. Prefusarielin is oxygenated at C15 and C16 by FSL4, resulting in fusarielin F, which subsequently is epoxidized into fusarielin G by the same enzyme. The final step in the pathway is a reduction of the carboxylic acid moiety to yield fusarielin H via a still undetermined mechanism. In Gibberella zeae (strain ATCC MYA-4620 / CBS 123657 / FGSC 9075 / NRRL 31084 / PH-1) (Wheat head blight fungus), this protein is Cytochrome P450 monooxygenase FSL4.